We begin with the raw amino-acid sequence, 138 residues long: Large ribosomal subunit protein mL54 (138 aa).

The N-terminal 14 residues, 1–14, are a transit peptide targeting the mitochondrion; it reads MATKRLFGATRTWA.

Belongs to the mitochondrion-specific ribosomal protein mL54 family. In terms of assembly, component of the mitochondrial large ribosomal subunit (mt-LSU). Mature mammalian 55S mitochondrial ribosomes consist of a small (28S) and a large (39S) subunit. The 28S small subunit contains a 12S ribosomal RNA (12S mt-rRNA) and 30 different proteins. The 39S large subunit contains a 16S rRNA (16S mt-rRNA), a copy of mitochondrial valine transfer RNA (mt-tRNA(Val)), which plays an integral structural role, and 52 different proteins.

The protein resides in the mitochondrion. This is Large ribosomal subunit protein mL54 (MRPL54) from Homo sapiens (Human).